Reading from the N-terminus, the 196-residue chain is MNKLILIIDNYDSFTHNLYQMAGEIMMEMDSADIMVVRNDEVDIDYVRGLDPERIIISPGPGNPIKREDFGICSEVIGEFTDRPILGVCLGHQGIFHYFGGVVGYGEPVHGKISEVFHDGSELFRGVPNPFRATRYHSLRCECSGVPEDILVSASAPDGTIMAIRHRQYPVYGLQFHPESAGTPHGRDILENFLRM.

Residues 4 to 196 enclose the Glutamine amidotransferase type-1 domain; it reads LILIIDNYDS…RDILENFLRM (193 aa). 60-62 lines the L-glutamine pocket; the sequence is GPG. Cys-89 (nucleophile; for GATase activity) is an active-site residue. L-glutamine contacts are provided by residues Gln-93 and 138-139; that span reads SL. Active-site for GATase activity residues include His-177 and Glu-179.

In terms of assembly, heterotetramer consisting of two non-identical subunits: a beta subunit (TrpG) and a large alpha subunit (TrpE).

It catalyses the reaction chorismate + L-glutamine = anthranilate + pyruvate + L-glutamate + H(+). Its pathway is amino-acid biosynthesis; L-tryptophan biosynthesis; L-tryptophan from chorismate: step 1/5. In terms of biological role, part of a heterotetrameric complex that catalyzes the two-step biosynthesis of anthranilate, an intermediate in the biosynthesis of L-tryptophan. In the first step, the glutamine-binding beta subunit (TrpG) of anthranilate synthase (AS) provides the glutamine amidotransferase activity which generates ammonia as a substrate that, along with chorismate, is used in the second step, catalyzed by the large alpha subunit of AS (TrpE) to produce anthranilate. In the absence of TrpG, TrpE can synthesize anthranilate directly from chorismate and high concentrations of ammonia. The chain is Anthranilate synthase component 2 (trpG) from Methanothermobacter marburgensis (strain ATCC BAA-927 / DSM 2133 / JCM 14651 / NBRC 100331 / OCM 82 / Marburg) (Methanobacterium thermoautotrophicum).